Consider the following 91-residue polypeptide: MARVTVQDAVEKIGNRFDLVLVAARRARQMQSGGKDPLVPEENDKTTVIALREIEEGLITNQILDVRERQEQQEQEAAELQAVTAIAEGRR.

The protein belongs to the RNA polymerase subunit omega family. As to quaternary structure, the RNAP catalytic core consists of 2 alpha, 1 beta, 1 beta' and 1 omega subunit. When a sigma factor is associated with the core the holoenzyme is formed, which can initiate transcription.

It catalyses the reaction RNA(n) + a ribonucleoside 5'-triphosphate = RNA(n+1) + diphosphate. Its function is as follows. Promotes RNA polymerase assembly. Latches the N- and C-terminal regions of the beta' subunit thereby facilitating its interaction with the beta and alpha subunits. The protein is DNA-directed RNA polymerase subunit omega of Enterobacter sp. (strain 638).